The primary structure comprises 295 residues: UDP-N-acetylenolpyruvoylglucosamine reductase (295 aa).

The FAD-binding PCMH-type domain maps to 24–188 (KVGGNAEIFF…LKVVFKINKG (165 aa)). Arg-168 is a catalytic residue. The Proton donor role is filled by Ser-217. Glu-287 is an active-site residue.

This sequence belongs to the MurB family. FAD is required as a cofactor.

Its subcellular location is the cytoplasm. It carries out the reaction UDP-N-acetyl-alpha-D-muramate + NADP(+) = UDP-N-acetyl-3-O-(1-carboxyvinyl)-alpha-D-glucosamine + NADPH + H(+). The protein operates within cell wall biogenesis; peptidoglycan biosynthesis. In terms of biological role, cell wall formation. This chain is UDP-N-acetylenolpyruvoylglucosamine reductase, found in Rickettsia peacockii (strain Rustic).